The sequence spans 108 residues: Ig kappa chain V-V region MOPC 173 (108 aa).

Residues Asp1–Cys23 form a framework-1 region. A disulfide bridge connects residues Cys23 and Cys88. Residues Ser24–Asx34 form a complementarity-determining-1 region. Residues Trp35–Tyr49 form a framework-2 region. The tract at residues Tyr50 to Ser56 is complementarity-determining-2. Residues Gly57–Cys88 are framework-3. Residues Gln89–Thr97 are complementarity-determining-3. Positions Phe98 to Arg108 are framework-4.

In Mus musculus (Mouse), this protein is Ig kappa chain V-V region MOPC 173.